A 272-amino-acid polypeptide reads, in one-letter code: 1,4-dihydroxy-2-naphthoyl-CoA synthase (272 aa).

Substrate contacts are provided by residues R33, 72-76 (SGGDQ), Y84, 116-120 (YAIGG), T142, S148, Y245, and K260. 141 to 143 (QTG) is a binding site for hydrogencarbonate. Positions 253–264 (GRDAFKEKRDPD) are enriched in basic and acidic residues. Residues 253–272 (GRDAFKEKRDPDFDQFPKFP) form a disordered region.

The protein belongs to the enoyl-CoA hydratase/isomerase family. MenB subfamily. Requires hydrogencarbonate as cofactor.

It catalyses the reaction 2-succinylbenzoyl-CoA + H(+) = 1,4-dihydroxy-2-naphthoyl-CoA + H2O. Its pathway is quinol/quinone metabolism; 1,4-dihydroxy-2-naphthoate biosynthesis; 1,4-dihydroxy-2-naphthoate from chorismate: step 6/7. It participates in quinol/quinone metabolism; menaquinone biosynthesis. Functionally, converts o-succinylbenzoyl-CoA (OSB-CoA) to 1,4-dihydroxy-2-naphthoyl-CoA (DHNA-CoA). The polypeptide is 1,4-dihydroxy-2-naphthoyl-CoA synthase (Staphylococcus haemolyticus (strain JCSC1435)).